The chain runs to 143 residues: Large ribosomal subunit protein uL11 (143 aa).

It belongs to the universal ribosomal protein uL11 family. In terms of assembly, part of the ribosomal stalk of the 50S ribosomal subunit. Interacts with L10 and the large rRNA to form the base of the stalk. L10 forms an elongated spine to which L12 dimers bind in a sequential fashion forming a multimeric L10(L12)X complex. One or more lysine residues are methylated.

Forms part of the ribosomal stalk which helps the ribosome interact with GTP-bound translation factors. This Stutzerimonas stutzeri (strain A1501) (Pseudomonas stutzeri) protein is Large ribosomal subunit protein uL11.